The following is a 333-amino-acid chain: Cytochrome f (333 aa).

Positions 1-44 (MRNACTRARLTRTARAMVKTLFIAIASVTFFFTSDLALPQSAAA) are cleaved as a signal peptide. Y45, C66, C69, and H70 together coordinate heme. A helical membrane pass occupies residues 299–318 (VGWLIAFVALVMLAQVMLVL).

Belongs to the cytochrome f family. The 4 large subunits of the cytochrome b6-f complex are cytochrome b6, subunit IV (17 kDa polypeptide, PetD), cytochrome f and the Rieske protein, while the 4 small subunits are PetG, PetL, PetM and PetN. The complex functions as a dimer. The cofactor is heme.

It localises to the cellular thylakoid membrane. Its function is as follows. Component of the cytochrome b6-f complex, which mediates electron transfer between photosystem II (PSII) and photosystem I (PSI), cyclic electron flow around PSI, and state transitions. The protein is Cytochrome f of Trichormus variabilis (strain ATCC 29413 / PCC 7937) (Anabaena variabilis).